The primary structure comprises 353 residues: Ribosomal RNA small subunit methyltransferase H (353 aa).

Residues 49–51 (GGH), D68, F95, D126, and Q133 contribute to the S-adenosyl-L-methionine site.

The protein belongs to the methyltransferase superfamily. RsmH family.

It localises to the cytoplasm. The enzyme catalyses cytidine(1402) in 16S rRNA + S-adenosyl-L-methionine = N(4)-methylcytidine(1402) in 16S rRNA + S-adenosyl-L-homocysteine + H(+). Functionally, specifically methylates the N4 position of cytidine in position 1402 (C1402) of 16S rRNA. In Corynebacterium urealyticum (strain ATCC 43042 / DSM 7109), this protein is Ribosomal RNA small subunit methyltransferase H.